The sequence spans 123 residues: Small ribosomal subunit protein uS13 (123 aa).

Positions R93–K123 are disordered.

Belongs to the universal ribosomal protein uS13 family. In terms of assembly, part of the 30S ribosomal subunit. Forms a loose heterodimer with protein S19. Forms two bridges to the 50S subunit in the 70S ribosome.

Its function is as follows. Located at the top of the head of the 30S subunit, it contacts several helices of the 16S rRNA. In the 70S ribosome it contacts the 23S rRNA (bridge B1a) and protein L5 of the 50S subunit (bridge B1b), connecting the 2 subunits; these bridges are implicated in subunit movement. Contacts the tRNAs in the A and P-sites. The sequence is that of Small ribosomal subunit protein uS13 from Clostridium botulinum (strain Loch Maree / Type A3).